The chain runs to 96 residues: Teretoxin Tgu6.1 (96 aa).

The N-terminal stretch at 1-16 (MRPFLVFVLIVSVSLA) is a signal peptide. The propeptide occupies 17–52 (FSFEDMPNKGGDSVASITADQARGHKRNPLFPFAQR).

Contains 3 disulfide bonds. As to expression, expressed by the venom duct.

Its subcellular location is the secreted. Its function is as follows. The recombinant protein causes paralysis to polychaete worms (Nereis virens), the natural prey of terebrid snails. The protein is Teretoxin Tgu6.1 of Terebra guttata (White spotted auger snail).